Reading from the N-terminus, the 182-residue chain is Large ribosomal subunit protein uL5 (182 aa).

The protein belongs to the universal ribosomal protein uL5 family. In terms of assembly, part of the 50S ribosomal subunit; part of the 5S rRNA/L5/L18/L25 subcomplex. Contacts the 5S rRNA and the P site tRNA. Forms a bridge to the 30S subunit in the 70S ribosome.

In terms of biological role, this is one of the proteins that bind and probably mediate the attachment of the 5S RNA into the large ribosomal subunit, where it forms part of the central protuberance. In the 70S ribosome it contacts protein S13 of the 30S subunit (bridge B1b), connecting the 2 subunits; this bridge is implicated in subunit movement. Contacts the P site tRNA; the 5S rRNA and some of its associated proteins might help stabilize positioning of ribosome-bound tRNAs. The chain is Large ribosomal subunit protein uL5 from Trichormus variabilis (strain ATCC 29413 / PCC 7937) (Anabaena variabilis).